A 211-amino-acid polypeptide reads, in one-letter code: MSSAGIPIQKKKNAYSAVKVDPNDDYATPGAFELERLFWKGSAKYTHVNEVWPGIYIGDETARDKATLQRLKITHILNSAHGKFNINTGANYYKDMLIHYYGIEAFDSPDFNLSVFFYSAAKFIRAGLNTPKLLVHCAMGRSRSATLVLAYLMIYKNMTVVDAIQEVIQRRCILPNRGFLKQLRTLDIQLAIERSNRRNGIKNNGEEKEAY.

Residues 47-192 (HVNEVWPGIY…LRTLDIQLAI (146 aa)) form the Tyrosine-protein phosphatase domain. Substrate is bound at residue 136-143 (HCAMGRSR). Residue C137 is the Phosphocysteine intermediate of the active site.

The protein belongs to the protein-tyrosine phosphatase family. Non-receptor class dual specificity subfamily.

The protein localises to the cytoplasm. The protein resides in the nucleus. The catalysed reaction is O-phospho-L-tyrosyl-[protein] + H2O = L-tyrosyl-[protein] + phosphate. It carries out the reaction O-phospho-L-seryl-[protein] + H2O = L-seryl-[protein] + phosphate. The enzyme catalyses O-phospho-L-threonyl-[protein] + H2O = L-threonyl-[protein] + phosphate. Dual specificity phosphatase able to dephosphorylate phosphotyrosine, phosphoserine and phosphothreonine residues within the same substrate, with a preference for phosphotyrosine as a substrate. Involved in the modulation of AMPK and MAPK1/2 signaling pathways. This is Dual specificity phosphatase 29 (dusp29) from Callorhinchus milii (Ghost shark).